Consider the following 70-residue polypeptide: Large ribosomal subunit protein bL31 (70 aa).

Residues C16, C18, C38, and C41 each contribute to the Zn(2+) site.

Belongs to the bacterial ribosomal protein bL31 family. Type A subfamily. In terms of assembly, part of the 50S ribosomal subunit. Requires Zn(2+) as cofactor.

Its function is as follows. Binds the 23S rRNA. This chain is Large ribosomal subunit protein bL31, found in Bifidobacterium adolescentis (strain ATCC 15703 / DSM 20083 / NCTC 11814 / E194a).